The sequence spans 236 residues: Phospholipid hydroperoxide glutathione peroxidase, chloroplastic (236 aa).

The transit peptide at 1–64 directs the protein to the chloroplast; it reads MASMAFSTTF…SNFPIVPSKT (64 aa). C111 is a catalytic residue.

It belongs to the glutathione peroxidase family.

Its subcellular location is the plastid. It is found in the chloroplast stroma. It carries out the reaction a hydroperoxy polyunsaturated fatty acid + 2 glutathione = a hydroxy polyunsaturated fatty acid + glutathione disulfide + H2O. In terms of biological role, protects cells and enzymes from oxidative damage, by catalyzing the reduction of hydrogen peroxide, lipid peroxides and organic hydroperoxide, by glutathione. This Pisum sativum (Garden pea) protein is Phospholipid hydroperoxide glutathione peroxidase, chloroplastic.